A 363-amino-acid chain; its full sequence is Mitogen-activated protein kinase kinase 2 (363 aa).

Ser-56 is subject to Phosphoserine. Residues 70-330 (LDMVKVIGKG…AKELMEHPFL (261 aa)) enclose the Protein kinase domain. ATP contacts are provided by residues 76-84 (IGKGSSGVV) and Lys-99. Asp-192 (proton acceptor) is an active-site residue. Residues Thr-220, Thr-226, and Thr-230 each carry the phosphothreonine modification.

The protein belongs to the protein kinase superfamily. STE Ser/Thr protein kinase family. MAP kinase kinase subfamily. As to quaternary structure, interacts with MEKK1, MPK4 and MPK6. May form a ternary complex composed of MEKK1 and MKK1/MKK2 and MPK4. Interacts with MPK10 and MPK11. Interacts with MAPKKK5 mainly in the cytosol. In terms of processing, phosphorylation at Thr-220 and Thr-226 by MAP kinase kinase kinases positively regulates kinase activity. Phosphorylated by MEKK1 in response to cold. Phosphorylated by MAPKKK5.

It catalyses the reaction L-seryl-[protein] + ATP = O-phospho-L-seryl-[protein] + ADP + H(+). The catalysed reaction is L-threonyl-[protein] + ATP = O-phospho-L-threonyl-[protein] + ADP + H(+). It carries out the reaction L-tyrosyl-[protein] + ATP = O-phospho-L-tyrosyl-[protein] + ADP + H(+). Activated in response to cold and salt stresses through serine and threonine phosphorylation by MEKK1. In terms of biological role, MEKK1, MKK1/MKK2 and MPK4 function in a signaling pathway that modulates the expression of genes responding to biotic and abiotic stresses and also plays an important role in pathogen defense by negatively regulating innate immunity. Plays a role in abiotic stress tolerance and plant disease resistance through activation of MPK4 and MPK6 by phosphorylation. Acts redundantly with MKK1. The sequence is that of Mitogen-activated protein kinase kinase 2 (MKK2) from Arabidopsis thaliana (Mouse-ear cress).